A 1162-amino-acid polypeptide reads, in one-letter code: Transcription termination factor 2 (1162 aa).

Residues cysteine 6, histidine 9, cysteine 32, and cysteine 37 each coordinate Zn(2+). Residues 6 to 46 (CPEHGTFCFLKTGVRDGPNKGKSFYVCRADTCSFVRATDIP) form a GRF-type zinc finger. Disordered regions lie at residues 97 to 116 (PDSKEHSVSNKSQHASETFH), 142 to 358 (IKGE…EEDD), 388 to 407 (DRSVQRKVSPASGVSKKVEP), and 459 to 503 (LSPE…TQPV). Over residues 105-116 (SNKSQHASETFH) the composition is skewed to polar residues. Residues 142–178 (IKGEGEEKKADKKQREKGDQLFDQKKEQKPEMMEKDL) are compositionally biased toward basic and acidic residues. Residue lysine 143 forms a Glycyl lysine isopeptide (Lys-Gly) (interchain with G-Cter in SUMO2) linkage. Positions 219–232 (IKSQQCQGNELTRP) are enriched in polar residues. A compositionally biased stretch (low complexity) spans 233–245 (SASSQEKSSGKSQ). Over residues 246 to 258 (DVQRESEPLREKV) the composition is skewed to basic and acidic residues. Positions 261–274 (LLPQNVHSHNSISK) are enriched in polar residues. The segment covering 323–338 (PAPGGPAAQAAPAAPG) has biased composition (low complexity). Residues 459–485 (LSPEQGTNEKSNSQVPQQSHFTKTTTG) are compositionally biased toward polar residues. Position 460 is a phosphoserine (serine 460). In terms of domain architecture, Helicase ATP-binding spans 583–786 (WRESQKPQGG…YSLLKFLRCS (204 aa)). 596 to 603 (DDMGLGKT) provides a ligand contact to ATP. The DEAH box motif lies at 737 to 740 (DEAH). A disordered region spans residues 871 to 890 (KRHESRGNQSGRSPNNPFSR). A compositionally biased stretch (polar residues) spans 877–888 (GNQSGRSPNNPF). Residues serine 883 and serine 908 each carry the phosphoserine modification. A Helicase C-terminal domain is found at 995-1157 (SLLAELEAIQ…VTKLTLADLR (163 aa)).

Belongs to the SNF2/RAD54 helicase family. As to quaternary structure, interacts with CDC5L. Part of the spliceosome.

It localises to the cytoplasm. The protein localises to the nucleus. DsDNA-dependent ATPase which acts as a transcription termination factor by coupling ATP hydrolysis with removal of RNA polymerase II from the DNA template. May contribute to mitotic transcription repression. May also be involved in pre-mRNA splicing. This Homo sapiens (Human) protein is Transcription termination factor 2 (TTF2).